Here is a 456-residue protein sequence, read N- to C-terminus: Ribosomal RNA small subunit methyltransferase F (456 aa).

S-adenosyl-L-methionine is bound by residues Ala109–Lys115, Glu133, Arg138, and Asp177. The active-site Nucleophile is the Cys230.

This sequence belongs to the class I-like SAM-binding methyltransferase superfamily. RsmB/NOP family.

The protein localises to the cytoplasm. It catalyses the reaction cytidine(1400) in 16S rRNA + S-adenosyl-L-methionine = 5-methylcytidine(1400) in 16S rRNA + S-adenosyl-L-homocysteine + H(+). It carries out the reaction cytidine(1404) in 16S rRNA + S-adenosyl-L-methionine = 5-methylcytidine(1404) in 16S rRNA + S-adenosyl-L-homocysteine + H(+). The catalysed reaction is cytidine(1407) in 16S rRNA + S-adenosyl-L-methionine = 5-methylcytidine(1407) in 16S rRNA + S-adenosyl-L-homocysteine + H(+). Functionally, specifically methylates the cytosines at positions 1400 (m5C1400), 1404 (m5C1404) and 1407 (m5C1407) of 16S rRNA. C1400, C1404 and C1407 are methylated in a 30S subunit substrate, but only C1400 and C1404 are methylated when naked 16S rRNA is the substrate. Methylation by RsmF may facilitate growth at temperatures outside the optimal growth temperature. The polypeptide is Ribosomal RNA small subunit methyltransferase F (Thermus thermophilus (strain ATCC 27634 / DSM 579 / HB8)).